The sequence spans 748 residues: Serine/threonine-protein kinase CG17528 (748 aa).

Polar residues-rich tracts occupy residues glutamine 22–serine 35 and glutamate 47–asparagine 59. Disordered regions lie at residues glutamine 22 to threonine 41 and glutamate 47 to aspartate 81. Phosphoserine is present on residues serine 67, serine 70, serine 73, serine 87, serine 88, and serine 89. Threonine 91 is modified (phosphothreonine). Position 93 is a phosphoserine (serine 93). Threonine 100 carries the post-translational modification Phosphothreonine. Doublecortin domains follow at residues leucine 158 to asparagine 244 and arginine 313 to phenylalanine 396. Positions tyrosine 477 to threonine 735 constitute a Protein kinase domain. ATP contacts are provided by residues isoleucine 483–valine 491 and lysine 506. Aspartate 598 serves as the catalytic Proton acceptor.

The protein belongs to the protein kinase superfamily. CAMK Ser/Thr protein kinase family. CaMK subfamily.

The enzyme catalyses L-seryl-[protein] + ATP = O-phospho-L-seryl-[protein] + ADP + H(+). It carries out the reaction L-threonyl-[protein] + ATP = O-phospho-L-threonyl-[protein] + ADP + H(+). This chain is Serine/threonine-protein kinase CG17528, found in Drosophila melanogaster (Fruit fly).